Consider the following 837-residue polypeptide: Striatin-interacting protein 1 (837 aa).

An N-acetylmethionine modification is found at Met-1. Positions 1-67 are disordered; sequence MEPAAGTPGP…DSEGYSESPD (67 aa). The span at 18 to 35 shows a compositional bias: pro residues; sequence PQPPPPPPPATAQPPPGA. The span at 47-60 shows a compositional bias: basic and acidic residues; the sequence is KAREFNRNQRKDSE. A phosphoserine mark is found at Ser-59, Ser-335, and Ser-339. The disordered stretch occupies residues 336 to 423; it reads PPASASDLIE…DRLTCPKGLP (88 aa). Basic and acidic residues predominate over residues 356–377; the sequence is KALIKQDNLDAFNERDPYKADD. The span at 378-391 shows a compositional bias: acidic residues; sequence SREEEEENDDDNSL. Phosphoserine is present on Ser-788. The interval 796-837 is required for STRIPAK core complex formation; it reads DNCLQSVLGQRVDLPEDFQMNYDLWLEREVFSKPISWEELLQ.

It belongs to the STRIP family. Part of the core of STRIPAK complexes composed of PP2A catalytic and scaffolding subunits, the striatins (PP2A regulatory subunits), the striatin-associated proteins MOB4, STRIP1 and STRIP2, PDCD10 and members of the STE20 kinases, such as STK24 and STK26. The STRIPAK complex can be extended by adapter proteins such as SLMAP:SIKE1, CTTNBP2 or CTTNBP2NL. Interacts with CDC42BPB. Interacts with CTTNBP2NL.

Its subcellular location is the cytoplasm. Its function is as follows. Plays a role in the regulation of cell morphology and cytoskeletal organization. Required in the cortical actin filament dynamics and cell shape. Part of the striatin-interacting phosphatase and kinase (STRIPAK) complexes. STRIPAK complexes have critical roles in protein (de)phosphorylation and are regulators of multiple signaling pathways including Hippo, MAPK, nuclear receptor and cytoskeleton remodeling. Different types of STRIPAK complexes are involved in a variety of biological processes such as cell growth, differentiation, apoptosis, metabolism and immune regulation. The polypeptide is Striatin-interacting protein 1 (STRIP1) (Bos taurus (Bovine)).